A 472-amino-acid polypeptide reads, in one-letter code: Sarcalumenin (472 aa).

Residues 1–19 (MRALLLFCFVASLLLSGQA) form the signal peptide. Residues 89–330 (ITSKPMVLFL…IENRLENKIA (242 aa)) enclose the Dynamin-type G domain. The segment at 99–106 (GPWSVGKS) is G1 motif. Ser-102 carries an N-linked (GlcNAc...) asparagine glycan. The G2 motif stretch occupies residues 127 to 128 (EP). The interval 189-192 (DTPG) is G3 motif. Positions 254–257 (NKAD) are G4 motif. Residue Pro-277 is a region of interest, G5 motif. N-linked (GlcNAc...) asparagine glycosylation is found at Asn-280 and Asn-388.

It belongs to the TRAFAC class dynamin-like GTPase superfamily. Dynamin/Fzo/YdjA family. Post-translationally, N-glycosylated. As to expression, detected in skeletal muscle.

The protein resides in the sarcoplasmic reticulum lumen. It localises to the sarcoplasmic reticulum membrane. This is Sarcalumenin (SRL) from Oryctolagus cuniculus (Rabbit).